A 271-amino-acid chain; its full sequence is Putative pyruvate, phosphate dikinase regulatory protein 1 (271 aa).

Residue 156 to 163 participates in ADP binding; sequence GVSRTSKT.

Belongs to the pyruvate, phosphate/water dikinase regulatory protein family. PDRP subfamily.

The catalysed reaction is N(tele)-phospho-L-histidyl/L-threonyl-[pyruvate, phosphate dikinase] + ADP = N(tele)-phospho-L-histidyl/O-phospho-L-threonyl-[pyruvate, phosphate dikinase] + AMP + H(+). It catalyses the reaction N(tele)-phospho-L-histidyl/O-phospho-L-threonyl-[pyruvate, phosphate dikinase] + phosphate + H(+) = N(tele)-phospho-L-histidyl/L-threonyl-[pyruvate, phosphate dikinase] + diphosphate. Its function is as follows. Bifunctional serine/threonine kinase and phosphorylase involved in the regulation of the pyruvate, phosphate dikinase (PPDK) by catalyzing its phosphorylation/dephosphorylation. The sequence is that of Putative pyruvate, phosphate dikinase regulatory protein 1 from Staphylococcus saprophyticus subsp. saprophyticus (strain ATCC 15305 / DSM 20229 / NCIMB 8711 / NCTC 7292 / S-41).